We begin with the raw amino-acid sequence, 408 residues long: UDP-glucose 4-epimerase 2 (408 aa).

13–44 (TVLVTGGAGYIGSHAVLQLLLAGFRAVVVDNL) provides a ligand contact to NAD(+). A substrate-binding site is contributed by serine 138. Tyrosine 162 functions as the Proton acceptor in the catalytic mechanism. The segment at 369 to 408 (GSPKQNGHCTNGFSESTRHNGHNGYGLVDSAKHNGNGHFH) is disordered. Polar residues predominate over residues 370-383 (SPKQNGHCTNGFSE).

The protein belongs to the NAD(P)-dependent epimerase/dehydratase family. It depends on NAD(+) as a cofactor.

The enzyme catalyses UDP-alpha-D-glucose = UDP-alpha-D-galactose. It functions in the pathway carbohydrate metabolism; galactose metabolism. Its function is as follows. Catalyzes the interconversion between UDP-glucose and UDP-galactose. This chain is UDP-glucose 4-epimerase 2 (UGE-2), found in Oryza sativa subsp. japonica (Rice).